Reading from the N-terminus, the 203-residue chain is Dephospho-CoA kinase (203 aa).

One can recognise a DPCK domain in the interval 4 to 203; that stretch reads VIGITGGIAT…EEGYIQSESE (200 aa). 12–17 lines the ATP pocket; that stretch reads ATGKST.

This sequence belongs to the CoaE family.

The protein resides in the cytoplasm. The catalysed reaction is 3'-dephospho-CoA + ATP = ADP + CoA + H(+). The protein operates within cofactor biosynthesis; coenzyme A biosynthesis; CoA from (R)-pantothenate: step 5/5. Catalyzes the phosphorylation of the 3'-hydroxyl group of dephosphocoenzyme A to form coenzyme A. This Staphylococcus epidermidis (strain ATCC 12228 / FDA PCI 1200) protein is Dephospho-CoA kinase.